The chain runs to 646 residues: uncharacterized protein (646 aa).

10 helical membrane passes run 20–40, 54–74, 115–135, 154–174, 203–223, 232–252, 285–305, 523–543, 582–602, and 613–633; these read AYFLSCVFAVSVFFVFTSFIF, LVKTCLSAALVVIIVFCIFFI, LAAIAAGIGAGLLFSKLFFMI, AFVMTIAGFLILFQTLLILSL, TVLSLLCLGSGYYLSATANAI, ILILVLIGTYFFFTQSSVAFF, LFLTSVITAVILTATGVIYMF, GVALMLFIGLFVSVLFFIVQG, IGFLFFIPFIAGTIHAGFAYA, and FLEAVIVIFIYFVFQALYYIV.

This sequence belongs to the ABC-4 integral membrane protein family.

The protein resides in the cell membrane. This is an uncharacterized protein from Bacillus subtilis (strain 168).